The sequence spans 249 residues: MTQRYRVTVAYDGTDFAGFQVQPKQRTVQGTLEKALTKMSKGAYIQVYGSGRTDSGVHAMGQVVHFDYPSELPAKSMLRALNSLLPLDMEVVDSQLADDDFHARFSTVGKRYMYRVDLGHYTNPFKRRYTGHYPYPIDVERIKAALSDVMGTHDYTSFAAAGGVIKDKVRTIYEATVVYNEAENELIFEFHGNGFLYNMVRILVATLLEIGNGRRDVHDFLRLYEVKDRQQARSTAPASGLYLKEVYYK.

The active-site Nucleophile is aspartate 54. Residue tyrosine 112 coordinates substrate.

It belongs to the tRNA pseudouridine synthase TruA family. As to quaternary structure, homodimer.

It catalyses the reaction uridine(38/39/40) in tRNA = pseudouridine(38/39/40) in tRNA. Its function is as follows. Formation of pseudouridine at positions 38, 39 and 40 in the anticodon stem and loop of transfer RNAs. This Latilactobacillus sakei subsp. sakei (strain 23K) (Lactobacillus sakei subsp. sakei) protein is tRNA pseudouridine synthase A.